Reading from the N-terminus, the 228-residue chain is Octanoyltransferase (228 aa).

Positions 32 to 214 (DVVPDTVLLV…HLRRLFERDW (183 aa)) constitute a BPL/LPL catalytic domain. Substrate is bound by residues 77 to 84 (RGGDVTYH), 144 to 146 (SVG), and 157 to 159 (GIA). The Acyl-thioester intermediate role is filled by Cys175.

Belongs to the LipB family.

It is found in the cytoplasm. It carries out the reaction octanoyl-[ACP] + L-lysyl-[protein] = N(6)-octanoyl-L-lysyl-[protein] + holo-[ACP] + H(+). It participates in protein modification; protein lipoylation via endogenous pathway; protein N(6)-(lipoyl)lysine from octanoyl-[acyl-carrier-protein]: step 1/2. Its function is as follows. Catalyzes the transfer of endogenously produced octanoic acid from octanoyl-acyl-carrier-protein onto the lipoyl domains of lipoate-dependent enzymes. Lipoyl-ACP can also act as a substrate although octanoyl-ACP is likely to be the physiological substrate. This chain is Octanoyltransferase, found in Syntrophobacter fumaroxidans (strain DSM 10017 / MPOB).